The chain runs to 382 residues: Chaperone protein DnaJ (382 aa).

The J domain maps to 4–69 (DYYEVLGVSR…DKRRRYDQFG (66 aa)). The CR-type zinc finger occupies 138–219 (GVEKTIKIKK…CYGEGIKQGE (82 aa)). Positions 151, 154, 167, 170, 193, 196, 207, and 210 each coordinate Zn(2+). CXXCXGXG motif repeat units lie at residues 151–158 (CKECNGSG), 167–174 (CPTCHGAG), 193–200 (CPTCGGEG), and 207–214 (CPSCYGEG).

The protein belongs to the DnaJ family. In terms of assembly, homodimer. The cofactor is Zn(2+).

The protein localises to the cytoplasm. Functionally, participates actively in the response to hyperosmotic and heat shock by preventing the aggregation of stress-denatured proteins and by disaggregating proteins, also in an autonomous, DnaK-independent fashion. Unfolded proteins bind initially to DnaJ; upon interaction with the DnaJ-bound protein, DnaK hydrolyzes its bound ATP, resulting in the formation of a stable complex. GrpE releases ADP from DnaK; ATP binding to DnaK triggers the release of the substrate protein, thus completing the reaction cycle. Several rounds of ATP-dependent interactions between DnaJ, DnaK and GrpE are required for fully efficient folding. Also involved, together with DnaK and GrpE, in the DNA replication of plasmids through activation of initiation proteins. The sequence is that of Chaperone protein DnaJ from Chlorobium luteolum (strain DSM 273 / BCRC 81028 / 2530) (Pelodictyon luteolum).